The chain runs to 73 residues: Protein BP4C (73 aa).

As to expression, pollen specific.

In Brassica napus (Rape), this protein is Protein BP4C (BP4C).